The sequence spans 148 residues: SsrA-binding protein (148 aa).

Residues 128–148 are disordered; it reads ESIAKKDQERNLKREFKNNNR.

Belongs to the SmpB family.

It is found in the cytoplasm. In terms of biological role, required for rescue of stalled ribosomes mediated by trans-translation. Binds to transfer-messenger RNA (tmRNA), required for stable association of tmRNA with ribosomes. tmRNA and SmpB together mimic tRNA shape, replacing the anticodon stem-loop with SmpB. tmRNA is encoded by the ssrA gene; the 2 termini fold to resemble tRNA(Ala) and it encodes a 'tag peptide', a short internal open reading frame. During trans-translation Ala-aminoacylated tmRNA acts like a tRNA, entering the A-site of stalled ribosomes, displacing the stalled mRNA. The ribosome then switches to translate the ORF on the tmRNA; the nascent peptide is terminated with the 'tag peptide' encoded by the tmRNA and targeted for degradation. The ribosome is freed to recommence translation, which seems to be the essential function of trans-translation. This chain is SsrA-binding protein, found in Fusobacterium nucleatum subsp. nucleatum (strain ATCC 25586 / DSM 15643 / BCRC 10681 / CIP 101130 / JCM 8532 / KCTC 2640 / LMG 13131 / VPI 4355).